The following is a 77-amino-acid chain: Acyl carrier protein (77 aa).

The Carrier domain occupies 1 to 75 (MVFEKVKDII…DVVNYIKAHT (75 aa)). O-(pantetheine 4'-phosphoryl)serine is present on Ser-35.

It belongs to the acyl carrier protein (ACP) family. In terms of processing, 4'-phosphopantetheine is transferred from CoA to a specific serine of apo-ACP by AcpS. This modification is essential for activity because fatty acids are bound in thioester linkage to the sulfhydryl of the prosthetic group.

It localises to the cytoplasm. The protein operates within lipid metabolism; fatty acid biosynthesis. In terms of biological role, carrier of the growing fatty acid chain in fatty acid biosynthesis. This is Acyl carrier protein from Clostridium acetobutylicum (strain ATCC 824 / DSM 792 / JCM 1419 / IAM 19013 / LMG 5710 / NBRC 13948 / NRRL B-527 / VKM B-1787 / 2291 / W).